We begin with the raw amino-acid sequence, 241 residues long: Ribose-5-phosphate isomerase A (241 aa).

Substrate is bound by residues 28–31 (TGST), 83–86 (DGAD), and 96–99 (KGGG). Glutamate 105 acts as the Proton acceptor in catalysis. Substrate is bound at residue lysine 123.

Belongs to the ribose 5-phosphate isomerase family. Homodimer.

The enzyme catalyses aldehydo-D-ribose 5-phosphate = D-ribulose 5-phosphate. Its pathway is carbohydrate degradation; pentose phosphate pathway; D-ribose 5-phosphate from D-ribulose 5-phosphate (non-oxidative stage): step 1/1. In terms of biological role, catalyzes the reversible conversion of ribose-5-phosphate to ribulose 5-phosphate. This Bradyrhizobium diazoefficiens (strain JCM 10833 / BCRC 13528 / IAM 13628 / NBRC 14792 / USDA 110) protein is Ribose-5-phosphate isomerase A.